The primary structure comprises 292 residues: Ephrin type-A receptor 4a (292 aa).

ATP-binding positions include 1 to 9 (IGIGEFGEV) and Lys-27. A Protein kinase domain is found at 1–265 (IGIGEFGEVC…QIVNMLDKLI (265 aa)). The active-site Proton acceptor is the Asp-120. Tyr-153 carries the post-translational modification Phosphotyrosine; by autocatalysis.

It belongs to the protein kinase superfamily. Tyr protein kinase family. Ephrin receptor subfamily. As to expression, widely expressed in the developing nervous system.

It is found in the cell membrane. The protein localises to the early endosome. The enzyme catalyses L-tyrosyl-[protein] + ATP = O-phospho-L-tyrosyl-[protein] + ADP + H(+). In terms of biological role, receptor tyrosine kinase which binds membrane-bound ephrin family ligands residing on adjacent cells, leading to contact-dependent bidirectional signaling into neighboring cells. The signaling pathway downstream of the receptor is referred to as forward signaling while the signaling pathway downstream of the ephrin ligand is referred to as reverse signaling. Highly promiscuous, it has the unique property among Eph receptors to bind and to be physiologically activated by both GPI-anchored ephrin-A and transmembrane ephrin-B ligands including efna1 and efnb3. Upon activation by ephrin ligands, modulates cell morphology and integrin-dependent cell adhesion through regulation of the Rac, Rap and Rho GTPases activity. Plays an important role in the development of the nervous system controlling different steps of axonal guidance including the establishment of the corticospinal projections. The chain is Ephrin type-A receptor 4a (epha4a) from Danio rerio (Zebrafish).